Here is a 942-residue protein sequence, read N- to C-terminus: MDFLRLRLPGLHQALRGALDSFSAFVSYLVGDTVPTVERQTQAAEELGEVTEGKVVGEEAQEVLEGLRSGQSEGVEAPEETRRCQEGSLAGEQTWGWRADSSARPQAERQDTGSWKAAEDARGQEPSVPLKPEAEPGTHRDRSSNTAQEIWEHGEEEASSGEPLRTCEQKEEEEEVVRAAESGMAEGVESQPTWHSEPGGNAGTEGQHVTEDSKEIDWVAKDMVAEIEWFGAKGIDKEEERMVPMRDGERARAQGTQCPGAESEDQAMLSREAWTVSDREGADSLGVQGTEYGSDPGDNFPGTTGRVWVLEEADKGDQQDEVDEKREAEVRFPIQTLEAERTGEMTEGHIAEEEAMGEQETEGSFEDEERQDLAIRDNGVSLEEEVRAEESSREKRNSWATEPTLVLDTEAKDEPDWEDSPEVSTEELFVGERSEAAQMTPEVLRVKVTEGQDPELVRHSQALTKQLEEGQKGQEETSGAPDLSPERVLSLKEYPGPVGFAGPELEAWGNWSRGVDRRNSQEVKADAEAGKEQTATEQAVEIRAEGGQEAQQPEVFGSGGEEALTSVALNPELEGSQGAEAGTEESVEESKPTENEAAEEEAVVPWEADGTCRKRRLEEVTLSLQDSEDTETSYLAEEIIVGIRAVDTEEGPKWEAGLAPETELGKAWCSEGRGEAGRGTELEETTEKQSGQEVGLVGSAEKVSGYDIQEIDGTEEGEQAEMETSVMAEDIRGTDGVTLGSQAERAEGSITPMETEGLLRDQMLLEEEAGGGQSREQKVHNSEGEIQTLDDSSDQEGQQTHQIPTVAVPGPLESAEATAGAPGDVHSNWNEALLPGSRLDVSVPRSRVLLSRSSSRRRSRPSFHRISVPEPQCDPPSPQPQAERPVPEQSSLQLEETPELSATKPEGTPVPARRKMLGRGFGFAHPGMMQELQARLSQPKPQ.

5 disordered regions span residues 66 to 212, 240 to 269, 283 to 487, 501 to 607, and 671 to 942; these read GLRS…VTED, ERMV…QAML, DSLG…SPER, AGPE…VPWE, and EGRG…PKPQ. Composition is skewed to basic and acidic residues over residues 106–123, 132–143, 240–252, 312–330, and 338–352; these read QAER…DARG, PEAEPGTHRDRS, ERMV…ERAR, EADK…EAEV, and EAER…HIAE. Positions 353–370 are enriched in acidic residues; that stretch reads EEAMGEQETEGSFEDEER. Ser364 carries the post-translational modification Phosphoserine. A compositionally biased stretch (basic and acidic residues) spans 384–397; the sequence is EEVRAEESSREKRN. Residues 415–425 show a composition bias toward acidic residues; sequence PDWEDSPEVST. 2 stretches are compositionally biased toward basic and acidic residues: residues 444-458 and 466-475; these read LRVK…ELVR and QLEEGQKGQE. 2 positions are modified to phosphoserine: Ser484 and Ser520. Basic and acidic residues-rich tracts occupy residues 514–531 and 672–687; these read GVDR…EAGK and GRGE…ETTE. Residues 709–721 show a composition bias toward acidic residues; sequence QEIDGTEEGEQAE. Positions 837-853 are enriched in low complexity; that stretch reads SRLDVSVPRSRVLLSRS. Over residues 854 to 863 the composition is skewed to basic residues; it reads SSRRRSRPSF.

As to quaternary structure, homodimer. There are 2 forms in macrophages, the membrane-binding proteins 200 kDa (MBP 200) and 235 kDa (MBP 235), that can be reduced into a single active ligand-binding species with intermediate mobility (MBP 200R). Highly expressed in spleen, lung and skeletal muscle, and weakly in brain, heart, kidney, and testis.

Its subcellular location is the cell membrane. Functionally, macrophage receptor that binds to the apolipoprotein B48 (APOB) of dietary triglyceride (TG)-rich lipoproteins (TRL) or to a like domain of APOB in hypertriglyceridemic very low density lipoprotein (HTG-VLDL). Binds and internalizes TRL when out of the context of the macrophage. May provide essential lipids to reticuloendothelial cells. Could also be involved in foam cell formation with elevated TRL and remnant lipoprotein (RLP). Mediates the rapid high-affinity uptake of chylomicrons (CM), HTG-VLDL, and trypsinized (tryp) VLDL devoid of APOE in vitro in macrophages. This Mus musculus (Mouse) protein is Apolipoprotein B receptor.